The sequence spans 1818 residues: Protein encore (1818 aa).

Disordered stretches follow at residues 47-68, 123-282, and 317-413; these read ANSSGVGSGSGPGPGSGAGVSG, SAAG…NSSN, and AERH…GFIS. Residues 52–66 are compositionally biased toward gly residues; that stretch reads VGSGSGPGPGSGAGV. The span at 124–137 shows a compositional bias: polar residues; that stretch reads AAGSSNLGRQNSFG. Positions 141–152 are enriched in basic residues; the sequence is GNMKGKHLTRSH. Composition is skewed to low complexity over residues 156-179, 186-199, 217-233, and 266-282; these read ESTSPPRTPTPRAASEQQQQQLQG, NNNNINSSSKAQSA, QQPQQQQQQQQQQQQSV, and NSNGSGMEFNNNNNSSN. Phosphoserine is present on residues Ser267 and Ser270. A compositionally biased stretch (basic and acidic residues) spans 317–328; it reads AERHDRHERHEM. Position 336 is a phosphoserine (Ser336). Over residues 338-348 the composition is skewed to basic and acidic residues; that stretch reads NHDEEPYHYEP. Composition is skewed to low complexity over residues 372–381 and 391–410; these read NLGGSSSGSI and NCNNMSNNGQSNNSSNNTSG. The region spanning 444 to 508 is the R3H domain; it reads RNILLKIEKD…QCVIVAVAKN (65 aa). The SUZ domain maps to 510-576; that stretch reads RIPEIRFQSL…ARSRIFSRTG (67 aa). Ser535 carries the post-translational modification Phosphoserine. The span at 557–568 shows a compositional bias: basic and acidic residues; it reads FEEREEDYDRAR. Disordered regions lie at residues 557–806, 885–916, 936–959, 1176–1249, 1332–1648, and 1684–1709; these read FEER…SYEQ, QEQEQEPMAGPSSSGSATSSVGITELPSSQTP, PYSQCEVKTPSQNHAPSAAVEEPK, GQAP…YNPS, AAAG…LVSH, and GAGASGAAGSNGGHQPGGGGGARSHI. A compositionally biased stretch (low complexity) spans 592–606; sequence YGGWEQQQQQQKQSQ. The segment covering 644-655 has biased composition (gly residues); sequence NYGGPPSSGGPG. Residues 678 to 695 show a composition bias toward polar residues; the sequence is QDSTGSTPWRLSPSSSGS. The segment covering 713-771 has biased composition (low complexity); it reads SGNQYQSQNQGNSSSGGYNNYRKSSPHQQQQSQQQQQSQQHHQQQLQQPQQLHQQSSQQ. Positions 772-784 are enriched in polar residues; it reads YATTELSCSSTES. Over residues 893-904 the composition is skewed to low complexity; that stretch reads AGPSSSGSATSS. Residues 1176 to 1197 are compositionally biased toward low complexity; sequence GQAPMQQQAPHTGAGTTTGPPT. Residues 1220–1231 are compositionally biased toward polar residues; it reads SSNGSVVTSSAY. Low complexity predominate over residues 1381–1392; the sequence is ASQSAPSTPAAP. Polar residues predominate over residues 1430–1443; that stretch reads TPHYYQGQNSNEGY. The span at 1503–1521 shows a compositional bias: low complexity; the sequence is ASPSSVSLGGASSSGGANS. Composition is skewed to polar residues over residues 1554 to 1565 and 1579 to 1596; these read AANSSPGVSSYE and FRSQKSMNQDYRRSVSQR. The segment covering 1608–1633 has biased composition (low complexity); the sequence is SHESSNNSPNSIVGSQSNSAANTPNA. Residues 1684-1705 are compositionally biased toward gly residues; the sequence is GAGASGAAGSNGGHQPGGGGGA.

In terms of assembly, interacts with hfp; however, given the nuclear localization of hfp, the relevance of such interaction is unclear. Interacts with CycE, Cul1, and the SCF-proteasome complex. In terms of tissue distribution, expressed in all germline cells of the germarium including the stem cells and dividing cystocytes.

The protein resides in the cytoplasm. In terms of biological role, required for the regulation of germline mitosis, karyosome formation, and establishment of dorsoventral (DS) polarity of the egg and embryo. Involved in proper grk mRNA localization and translation in the oocyte. May control germline mitosis by facilitating the cyclin E (CycE) proteolysis by the SCF-ubiquitin-proteasome complex. This is Protein encore (enc) from Drosophila melanogaster (Fruit fly).